Consider the following 905-residue polypeptide: Respiratory burst oxidase homolog protein B (905 aa).

Disordered stretches follow at residues 1-46 (MADL…KTAR) and 69-134 (EVRG…VRKR). The Cytoplasmic portion of the chain corresponds to 1–355 (MADLEAGMVA…MYFLEENWKR (355 aa)). Residues 29 to 44 (IPNSGNLGSSNRSTKT) show a composition bias toward polar residues. The segment covering 75–84 (EGGSGHGTGF) has biased composition (gly residues). Residues 91–108 (SPSSKSGKLTSKLRQVTN) are compositionally biased toward polar residues. EF-hand-like regions lie at residues 172-180 (QVDGVLLRS) and 206-217 (RGIVKQVLTKDE). 2 consecutive EF-hand domains span residues 229–264 (GFDN…SASA) and 273–308 (RADE…SPSE). Positions 242, 244, 246, 248, and 253 each coordinate Ca(2+). Residues 356–376 (SWVMTLWISICIALFIWKFIQ) form a helical membrane-spanning segment. The Extracellular portion of the chain corresponds to 377-440 (YRNRAVFGIM…FNDNINFHKV (64 aa)). The 157-residue stretch at 395–551 (GAAETLKFNM…HLFVIVYTLL (157 aa)) folds into the Ferric oxidoreductase domain. The helical transmembrane segment at 441–461 (IAAGVAVGVALHAGAHLTCDF) threads the bilayer. Topologically, residues 462-496 (PRLLHASDAQYELMKPFFGEKRPPNYWWFVKGTEG) are cytoplasmic. A helical membrane pass occupies residues 497–517 (WTGVVMVVLMAIAFTLAQPWF). Over 518-539 (RRNKLKDSNPLKKMTGFNAFWF) the chain is Extracellular. A helical transmembrane segment spans residues 540–560 (THHLFVIVYTLLFVHGTCLYL). Over 561 to 568 (SRKWYKKT) the chain is Cytoplasmic. Residues 569–586 (TWMYLAVPVVLYVSERIL) traverse the membrane as a helical segment. One can recognise an FAD-binding FR-type domain in the interval 587-715 (RLFRSHDAVG…DGPYGAPAQD (129 aa)). Residues 587-717 (RLFRSHDAVG…PYGAPAQDYR (131 aa)) lie on the Extracellular side of the membrane. Residues 718–738 (EYDVLLLIGLGIGATPLISIV) form a helical membrane-spanning segment. Topologically, residues 739–905 (KDVLNHIQGE…TRFDFHKENF (167 aa)) are cytoplasmic.

It belongs to the RBOH (TC 5.B.1.3) family. In terms of assembly, monomer and homodimer, stabilized by swapping the EF-hand motifs. Interacts with GTP-bound RAC1.

It is found in the membrane. Its function is as follows. Calcium-dependent NADPH oxidase that generates superoxide. The polypeptide is Respiratory burst oxidase homolog protein B (RBOHB) (Oryza sativa subsp. japonica (Rice)).